A 201-amino-acid chain; its full sequence is Small ribosomal subunit protein uS4c (201 aa).

The disordered stretch occupies residues 15–44; it reads LGALPGLTNKRPRAGSDLRNQSRSGKKSQY. The S4 RNA-binding domain occupies 89-149; it reads MRLDNILFRL…DEQNSRALIQ (61 aa).

The protein belongs to the universal ribosomal protein uS4 family. As to quaternary structure, part of the 30S ribosomal subunit. Contacts protein S5. The interaction surface between S4 and S5 is involved in control of translational fidelity.

The protein resides in the plastid. It localises to the chloroplast. In terms of biological role, one of the primary rRNA binding proteins, it binds directly to 16S rRNA where it nucleates assembly of the body of the 30S subunit. With S5 and S12 plays an important role in translational accuracy. In Daucus carota (Wild carrot), this protein is Small ribosomal subunit protein uS4c (rps4).